Consider the following 168-residue polypeptide: Phosphopantetheine adenylyltransferase (168 aa).

Residue Thr9 coordinates substrate. Residues 9–10 and His17 contribute to the ATP site; that span reads TF. Residues Lys41, Leu73, and Arg87 each coordinate substrate. ATP is bound by residues 88 to 90, Glu98, and 123 to 129; these read GLR and YQFISGT.

The protein belongs to the bacterial CoaD family. As to quaternary structure, homohexamer. It depends on Mg(2+) as a cofactor.

The protein localises to the cytoplasm. The enzyme catalyses (R)-4'-phosphopantetheine + ATP + H(+) = 3'-dephospho-CoA + diphosphate. Its pathway is cofactor biosynthesis; coenzyme A biosynthesis; CoA from (R)-pantothenate: step 4/5. Its function is as follows. Reversibly transfers an adenylyl group from ATP to 4'-phosphopantetheine, yielding dephospho-CoA (dPCoA) and pyrophosphate. The polypeptide is Phosphopantetheine adenylyltransferase (Paraburkholderia phymatum (strain DSM 17167 / CIP 108236 / LMG 21445 / STM815) (Burkholderia phymatum)).